A 101-amino-acid chain; its full sequence is Small ribosomal subunit protein uS14 (101 aa).

Belongs to the universal ribosomal protein uS14 family. As to quaternary structure, part of the 30S ribosomal subunit. Contacts proteins S3 and S10.

Its function is as follows. Binds 16S rRNA, required for the assembly of 30S particles and may also be responsible for determining the conformation of the 16S rRNA at the A site. The chain is Small ribosomal subunit protein uS14 from Pelagibacter ubique (strain HTCC1062).